The primary structure comprises 238 residues: Cysteine-rich venom protein pseudechetoxin-like (238 aa).

An N-terminal signal peptide occupies residues 1 to 19 (MIAFIVLLSLAAVLQQSSG). Residues 20-28 (TVDFASESS) constitute a propeptide that is removed on maturation. In terms of domain architecture, SCP spans 38–164 (VDKHNDLRRS…STKYLYVCQY (127 aa)). Intrachain disulfides connect cysteine 75–cysteine 153, cysteine 92–cysteine 165, cysteine 148–cysteine 162, cysteine 184–cysteine 191, cysteine 187–cysteine 196, cysteine 200–cysteine 233, cysteine 209–cysteine 227, and cysteine 218–cysteine 231. Positions 200–233 (CKHNDDLSNCKPLAKKSKCQTEWIKSKCPATCFC) constitute a ShKT domain.

This sequence belongs to the CRISP family. As to expression, expressed by the venom gland.

The protein localises to the secreted. Blocks olfactory (CNGA2) and retinal (CNGA1) CNG channel currents. Does not affect neither depolarization- nor caffeine-induced contraction of smooth muscle. This chain is Cysteine-rich venom protein pseudechetoxin-like, found in Oxyuranus microlepidotus (Inland taipan).